The following is a 465-amino-acid chain: Spermidine/putrescine import ATP-binding protein PotA (465 aa).

Over residues 1-18 (MTATSGARTSDARTSGAR) the composition is skewed to polar residues. Residues 1 to 21 (MTATSGARTSDARTSGARTSD) are disordered. The 235-residue stretch at 30-264 (IELVGVAKDY…PRTRFVAGFI (235 aa)) folds into the ABC transporter domain. An ATP-binding site is contributed by 66–73 (GPSGCGKS).

This sequence belongs to the ABC transporter superfamily. Spermidine/putrescine importer (TC 3.A.1.11.1) family. As to quaternary structure, the complex is composed of two ATP-binding proteins (PotA), two transmembrane proteins (PotB and PotC) and a solute-binding protein (PotD).

The protein resides in the cell membrane. It catalyses the reaction ATP + H2O + polyamine-[polyamine-binding protein]Side 1 = ADP + phosphate + polyamineSide 2 + [polyamine-binding protein]Side 1.. Functionally, part of the ABC transporter complex PotABCD involved in spermidine/putrescine import. Responsible for energy coupling to the transport system. This chain is Spermidine/putrescine import ATP-binding protein PotA, found in Frankia alni (strain DSM 45986 / CECT 9034 / ACN14a).